The following is a 102-amino-acid chain: Small ribosomal subunit protein uS10 (102 aa).

This sequence belongs to the universal ribosomal protein uS10 family. As to quaternary structure, part of the 30S ribosomal subunit.

Involved in the binding of tRNA to the ribosomes. The sequence is that of Small ribosomal subunit protein uS10 from Methanobrevibacter smithii (strain ATCC 35061 / DSM 861 / OCM 144 / PS).